We begin with the raw amino-acid sequence, 283 residues long: Formamidopyrimidine-DNA glycosylase (283 aa).

Pro2 (schiff-base intermediate with DNA) is an active-site residue. The active-site Proton donor is Glu3. Lys58 functions as the Proton donor; for beta-elimination activity in the catalytic mechanism. DNA-binding residues include His100, Arg119, and Arg162. Residues 247 to 283 form an FPG-type zinc finger; that stretch reads RVYGREGLPCVTPGCSGTVGRIVQSGRSSFHCPLCQR. The Proton donor; for delta-elimination activity role is filled by Arg273.

This sequence belongs to the FPG family. In terms of assembly, monomer. Requires Zn(2+) as cofactor.

The enzyme catalyses Hydrolysis of DNA containing ring-opened 7-methylguanine residues, releasing 2,6-diamino-4-hydroxy-5-(N-methyl)formamidopyrimidine.. It carries out the reaction 2'-deoxyribonucleotide-(2'-deoxyribose 5'-phosphate)-2'-deoxyribonucleotide-DNA = a 3'-end 2'-deoxyribonucleotide-(2,3-dehydro-2,3-deoxyribose 5'-phosphate)-DNA + a 5'-end 5'-phospho-2'-deoxyribonucleoside-DNA + H(+). Its function is as follows. Involved in base excision repair of DNA damaged by oxidation or by mutagenic agents. Acts as a DNA glycosylase that recognizes and removes damaged bases. Has a preference for oxidized purines, such as 7,8-dihydro-8-oxoguanine (8-oxoG). Has AP (apurinic/apyrimidinic) lyase activity and introduces nicks in the DNA strand. Cleaves the DNA backbone by beta-delta elimination to generate a single-strand break at the site of the removed base with both 3'- and 5'-phosphates. The sequence is that of Formamidopyrimidine-DNA glycosylase from Cereibacter sphaeroides (strain ATCC 17029 / ATH 2.4.9) (Rhodobacter sphaeroides).